A 410-amino-acid polypeptide reads, in one-letter code: GCPQGSIGGPILWNLSMNGMLIELAGSGVSVCAFADDVAILAEGNTRKEVERVINEKMEIVYKWGEKMGVSVSEEKTVCMLLKGKYVTSNRAVRVSKTINVYKRIKYVSCFRYLGVNVTEGMGFGEHVRGMKVKVAKGVQKLKRVLRRDWGLRRAASHLVLRGTFLPQVSYCASAWYEVLKYEYGRNALSAAVRYVMYACLNVCRTVSTEAMQVLTGWLPWDLECLKRANVYKVRKGLSMNEMDVVKNEEVESSSVIKLERLVDERVYEIWQERWVVSMKGRVTARFIKDVKYAGRSRSFEPDRWVVNILTGHGTLNAFLHKRGLSESASCMCGDVSEDWEHVLCRCSMYESFRNLDEMGVTVCVNGEYEFTGVLSSNVTYGKMCEFINRAYEMRESVRRRLNLELDVNG.

Residues 1–118 form the Reverse transcriptase domain; sequence GCPQGSIGGP…SCFRYLGVNV (118 aa). The tract at residues 254–410 is nucleic acid-binding endonuclease; that stretch reads SSVIKLERLV…RLNLELDVNG (157 aa).

The enzyme catalyses DNA(n) + a 2'-deoxyribonucleoside 5'-triphosphate = DNA(n+1) + diphosphate. The chain is Retrovirus-related Pol polyprotein from type-1 retrotransposable element R1 2 from Nasonia vitripennis (Parasitic wasp).